We begin with the raw amino-acid sequence, 240 residues long: Uridylate kinase (240 aa).

ATP is bound at residue 13–16; it reads KFSG. Gly55 is a UMP binding site. Residues Gly56 and Arg60 each coordinate ATP. Residues Asp76 and 137 to 144 each bind UMP; that span reads TGNPFFTT. ATP is bound by residues Thr164, Tyr170, and Asp173.

The protein belongs to the UMP kinase family. As to quaternary structure, homohexamer.

The protein resides in the cytoplasm. The catalysed reaction is UMP + ATP = UDP + ADP. The protein operates within pyrimidine metabolism; CTP biosynthesis via de novo pathway; UDP from UMP (UMPK route): step 1/1. Inhibited by UTP. Catalyzes the reversible phosphorylation of UMP to UDP. This Helicobacter acinonychis (strain Sheeba) protein is Uridylate kinase.